A 92-amino-acid polypeptide reads, in one-letter code: Small ribosomal subunit protein uS19 (92 aa).

The protein belongs to the universal ribosomal protein uS19 family.

In terms of biological role, protein S19 forms a complex with S13 that binds strongly to the 16S ribosomal RNA. In Rhodospirillum centenum (strain ATCC 51521 / SW), this protein is Small ribosomal subunit protein uS19.